The primary structure comprises 393 residues: S-adenosylmethionine synthase (393 aa).

H17 lines the ATP pocket. D19 provides a ligand contact to Mg(2+). Position 45 (E45) interacts with K(+). 2 residues coordinate L-methionine: E58 and Q106. Residues 106 to 116 (QSAHIAQGVDA) form a flexible loop region. Residues 171 to 173 (DAK), 237 to 238 (KF), D246, 252 to 253 (RK), A269, and K273 each bind ATP. D246 contacts L-methionine. K277 serves as a coordination point for L-methionine.

Belongs to the AdoMet synthase family. As to quaternary structure, homotetramer; dimer of dimers. It depends on Mg(2+) as a cofactor. K(+) is required as a cofactor.

The protein localises to the cytoplasm. It carries out the reaction L-methionine + ATP + H2O = S-adenosyl-L-methionine + phosphate + diphosphate. The protein operates within amino-acid biosynthesis; S-adenosyl-L-methionine biosynthesis; S-adenosyl-L-methionine from L-methionine: step 1/1. Catalyzes the formation of S-adenosylmethionine (AdoMet) from methionine and ATP. The overall synthetic reaction is composed of two sequential steps, AdoMet formation and the subsequent tripolyphosphate hydrolysis which occurs prior to release of AdoMet from the enzyme. The protein is S-adenosylmethionine synthase of Jannaschia sp. (strain CCS1).